Consider the following 1159-residue polypeptide: MSIRFIYGRAGSGKTYFCLEEIKHKLNDGANHPLILLVPEQFTFEAEKYLLDMIERDEKMRAQVLSFKTLANRVFVEVGGLARQHMKACGKSMVIYKVLEENKEKLKVYSKASRQQGFVKKISEAITEFKRFDVTPFQLIDASEKIEKLGLKEKLEDLALIYSSFEEVLHKNYIDEEDELDLLSKKLEKSLQFEGAEFWIDGFTGFTPKQYKVIEKLLKKASRVSVTLTLDPSIDSIDPTHLFYTTKKTEEKLIKICETNGISVEEPVNLNKGIPKRFEHNKELAFLEKNFFSHPYEIYNEETKNISIFKATNMYSEVEEVARDIARLIRDEHMRYSDIVVATKDLKRYYKLVKAIFSHYGIPHFIDLKINITNNPIIVYVISIFEIYLKNWSYESVFRYLKTGFTGIDKEEINLLENYVLANGIKGNKWKERWEYRIDYKTDSLLMEEREKQIINKVNEVRERVYLPLEKFYTRFSHSKNVKEACEVLYDFLVENKLPEKIEKFIEEFKNRGEFDTANQYAQIWDIVVDVLDQMVEVLGEEKISLEQFARLISIGFDEYQIASIPPALDEVLVTSVDRMKSHNSKVLYLLGANDGVFPASSFEEGIFSDEERNLLSSLDLELDRDTKAKVFEEQFLVYTALTSASEFLKISYPIADHEGRSLRPSIIISRLRRIFPKIKVSTNIVEMDTDEENLNRVTVPLPTFNEMIKSFKKWNITGKIHPIWLEVYKWYRTKDEWKKKLEDTLEGFVYDNQIKRIPPLKIKKLYGEEMEFSVSRLEKYAACPFAYFVQYGLKAKERKIYGFEPPDLGIFMHNVLNEIAKALEKEELTWQEIDKEWCNDAVDIIVEEMVDKIPGYILKSSSRYRYLANRLKRVLSKAVWIISEHMKRSSFVPLGHEVAFGENQKYPPIKIVLSNGEEIKLIGRIDRVDVLEKEGETYVRIIDYKSGDKTLDLSDVLYGLELQLLVYLDAILESAFEGKANLSPAGIFYFKIDDPIVRADKDISDEELYKEIMKRLRLEGFVLKSLDIIREMDKLIEGTSYVIPASINKDGTIGKNTKGLTEEQFEILRKFVKKKSKKLAEEMLQGDISILPYKKEKETACQYCPYSSICKFETNFKGNDYRRIESKEEKLWSIFEEEVKEDGSQVDGRTEGSDNNEG.

Gly8–Thr15 lines the ATP pocket. Residues Cys784, Cys1102, Cys1105, and Cys1111 each contribute to the [4Fe-4S] cluster site. The segment at Val1140–Gly1159 is disordered.

Belongs to the helicase family. AddB/RexB type 1 subfamily. Heterodimer of AddA and AddB. The cofactor is Mg(2+). It depends on [4Fe-4S] cluster as a cofactor.

The heterodimer acts as both an ATP-dependent DNA helicase and an ATP-dependent, dual-direction single-stranded exonuclease. Recognizes the chi site generating a DNA molecule suitable for the initiation of homologous recombination. The AddB subunit has 5' -&gt; 3' nuclease activity but not helicase activity. The polypeptide is ATP-dependent helicase/deoxyribonuclease subunit B (Caldanaerobacter subterraneus subsp. tengcongensis (strain DSM 15242 / JCM 11007 / NBRC 100824 / MB4) (Thermoanaerobacter tengcongensis)).